Here is a 423-residue protein sequence, read N- to C-terminus: COP9 signalosome complex subunit 3 (423 aa).

The residue at position 2 (Ala2) is an N-acetylalanine. Residues 197-365 (NFERALYFYE…GMVSFHDNPE (169 aa)) form the PCI domain. Residues 402–423 (QFVQKSMGSQEDDSGNKPSSYS) are disordered. Ser407, Ser410, and Ser423 each carry phosphoserine.

This sequence belongs to the CSN3 family. As to quaternary structure, component of the CSN complex, composed of COPS1/GPS1, COPS2, COPS3, COPS4, COPS5, COPS6, COPS7 (COPS7A or COPS7B), COPS8 and COPS9 isoform 1. In the complex, it probably interacts directly with COPS1, COPS4, COPS8 and COPS9 isoform 1. Interacts with CK2 and PKD. Interacts with the translation initiation factor EIF3S6 and IKBKG. Interacts with ERCC6. As to expression, widely expressed. Expressed at high level in heart and skeletal muscle.

Its subcellular location is the cytoplasm. It is found in the nucleus. Its function is as follows. Component of the COP9 signalosome complex (CSN), a complex involved in various cellular and developmental processes. The CSN complex is an essential regulator of the ubiquitin (Ubl) conjugation pathway by mediating the deneddylation of the cullin subunits of SCF-type E3 ligase complexes, leading to decrease the Ubl ligase activity of SCF-type complexes such as SCF, CSA or DDB2. The complex is also involved in phosphorylation of p53/TP53, c-jun/JUN, IkappaBalpha/NFKBIA, ITPK1 and IRF8/ICSBP, possibly via its association with CK2 and PKD kinases. CSN-dependent phosphorylation of TP53 and JUN promotes and protects degradation by the Ubl system, respectively. The protein is COP9 signalosome complex subunit 3 (COPS3) of Homo sapiens (Human).